Reading from the N-terminus, the 851-residue chain is Phosphatidylinositol 4-kinase pik1 (851 aa).

A PIK helical domain is found at methionine 1–isoleucine 123. 4 positions are modified to phosphoserine: serine 202, serine 219, serine 222, and serine 235. The residue at position 236 (tyrosine 236) is a Phosphotyrosine. Residues leucine 384–methionine 404 form a disordered region. Residues threonine 388–glycine 399 show a composition bias toward acidic residues. Residues tyrosine 558–tryptophan 836 form the PI3K/PI4K catalytic domain. A G-loop region spans residues isoleucine 564–tyrosine 570. The segment at glutamine 706 to asparagine 714 is catalytic loop. Residues histidine 725–threonine 749 are activation loop.

This sequence belongs to the PI3/PI4-kinase family. Interacts with cdc4 and cam2.

It is found in the golgi apparatus. Its subcellular location is the nucleus. It carries out the reaction a 1,2-diacyl-sn-glycero-3-phospho-(1D-myo-inositol) + ATP = a 1,2-diacyl-sn-glycero-3-phospho-(1D-myo-inositol 4-phosphate) + ADP + H(+). Its function is as follows. Acts on phosphatidylinositol (PI) in the first committed step in the production of the second messenger inositol 1,4,5,-trisphosphate. PIK1 is part of a nuclear phosphoinositide cycle and could control cytokinesis through the actin cytoskeleton. This Schizosaccharomyces pombe (strain 972 / ATCC 24843) (Fission yeast) protein is Phosphatidylinositol 4-kinase pik1 (pik1).